We begin with the raw amino-acid sequence, 351 residues long: MNLSFRWYGADDAVKLQYIRQIPSIKSIVTAIYDVPVGEKWSIEAILKLKNEVESYGLNFDVIESVPVHEDIKLGLKTRDKYIENYKENIRNLSKAGVKVICYNFMPIFDWTRTQVDKVLDDGSTTLVYYKNQLKKMDPLTGELSLPGWDSSYTKDQLSSLFEKYQNVDQEVLWSNLEYFLKQIIPVAEECDVKMAIHPDDPPYNIFGLPRIITNEQNLDRFLKIVDSKYNGLTFCTGSLGCASFNDVVKMVDKYSSQGRIHFMHVRNVKLLFDGSFEESAHYSPCGSLDIVEIMKVLHKNKFDGYIRPDHGRMIWGETGRPGYGLYDRALGAMYITGIWETLEKISKEDK.

Belongs to the mannonate dehydratase family. The cofactor is Fe(2+). It depends on Mn(2+) as a cofactor.

It carries out the reaction D-mannonate = 2-dehydro-3-deoxy-D-gluconate + H2O. It functions in the pathway carbohydrate metabolism; pentose and glucuronate interconversion. In terms of biological role, catalyzes the dehydration of D-mannonate. This Clostridium acetobutylicum (strain ATCC 824 / DSM 792 / JCM 1419 / IAM 19013 / LMG 5710 / NBRC 13948 / NRRL B-527 / VKM B-1787 / 2291 / W) protein is Mannonate dehydratase.